A 396-amino-acid chain; its full sequence is Phosphoglycerate kinase (396 aa).

Substrate-binding positions include 21-23, arginine 36, 59-62, arginine 119, and arginine 156; these read DFN and HLGK. Residues lysine 206, glycine 294, glutamate 325, and 352-355 each bind ATP; that span reads GGDS.

This sequence belongs to the phosphoglycerate kinase family. As to quaternary structure, monomer.

The protein resides in the cytoplasm. The enzyme catalyses (2R)-3-phosphoglycerate + ATP = (2R)-3-phospho-glyceroyl phosphate + ADP. It functions in the pathway carbohydrate degradation; glycolysis; pyruvate from D-glyceraldehyde 3-phosphate: step 2/5. The polypeptide is Phosphoglycerate kinase (Listeria monocytogenes serotype 4a (strain HCC23)).